The following is a 426-amino-acid chain: 26S proteasome regulatory subunit 7 homolog A (426 aa).

209–216 (GPPGTGKT) lines the ATP pocket. Glycyl lysine isopeptide (Lys-Gly) (interchain with G-Cter in ubiquitin) cross-links involve residues lysine 400 and lysine 415.

The protein belongs to the AAA ATPase family. Component of the 19S regulatory particle (RP/PA700) base subcomplex of the 26S proteasome. The 26S proteasome is composed of a core protease (CP), known as the 20S proteasome, capped at one or both ends by the 19S regulatory particle (RP/PA700). The RP/PA700 complex is composed of at least 17 different subunits in two subcomplexes, the base and the lid, which form the portions proximal and distal to the 20S proteolytic core, respectively.

The protein resides in the cytoplasm. It localises to the nucleus. Functionally, the 26S proteasome is involved in the ATP-dependent degradation of ubiquitinated proteins. The regulatory (or ATPase) complex confers ATP dependency and substrate specificity to the 26S complex. The chain is 26S proteasome regulatory subunit 7 homolog A (RPT1A) from Arabidopsis thaliana (Mouse-ear cress).